A 610-amino-acid polypeptide reads, in one-letter code: V-type proton ATPase catalytic subunit A (610 aa).

245–252 (GAFGCGKT) contacts ATP.

It belongs to the ATPase alpha/beta chains family. As to quaternary structure, V-ATPase is a heteromultimeric enzyme composed of a peripheral catalytic V1 complex (main components: subunits A, B, C, D, E, and F) attached to an integral membrane V0 proton pore complex (main component: the proteolipid protein).

The catalysed reaction is ATP + H2O + 4 H(+)(in) = ADP + phosphate + 5 H(+)(out). Its function is as follows. Catalytic subunit of the peripheral V1 complex of vacuolar ATPase. V-ATPase vacuolar ATPase is responsible for acidifying a variety of intracellular compartments in eukaryotic cells. The chain is V-type proton ATPase catalytic subunit A from Trypanosoma congolense.